We begin with the raw amino-acid sequence, 348 residues long: Phospho-2-dehydro-3-deoxyheptonate aldolase, Trp-sensitive (348 aa).

The protein belongs to the class-I DAHP synthase family.

The catalysed reaction is D-erythrose 4-phosphate + phosphoenolpyruvate + H2O = 7-phospho-2-dehydro-3-deoxy-D-arabino-heptonate + phosphate. The protein operates within metabolic intermediate biosynthesis; chorismate biosynthesis; chorismate from D-erythrose 4-phosphate and phosphoenolpyruvate: step 1/7. In terms of biological role, stereospecific condensation of phosphoenolpyruvate (PEP) and D-erythrose-4-phosphate (E4P) giving rise to 3-deoxy-D-arabino-heptulosonate-7-phosphate (DAHP). The protein is Phospho-2-dehydro-3-deoxyheptonate aldolase, Trp-sensitive (aroH) of Escherichia coli O6:H1 (strain CFT073 / ATCC 700928 / UPEC).